A 577-amino-acid polypeptide reads, in one-letter code: MRGQRRWAHPFTLIRRLFGNAVFSSLTRRIVFFNLVALVVLVGGIMYLNQFREGLIDARVESLLTQGEIIAGAISASASVDTNSITIDPEKLLELQAGESITPLPSDEDLEFPIIQERVAPVLRRLISPTRTRARLFDADADLLLDSRHLYSGGQVLRFDLPPVDPESPSLADEFGTWFNRLLQPGDLPLYKEPPGGNGSIYPEVMNALTGVRGAVVRVTEKGELIVSVAVPVQRFRAVLGVLLLSTQAGDIDKIVHAERLAIIRVFGVAALVNVILSLLLSSTIANPLRRLSAAAIRVRRGGAKEREEIPDFSSRQDEIGNLSVALREMTTALYDRIAAIENFAADVSHELKNPLTSLRSAVETLPLARNEESKKRLMDVIQHDVRRLDRLISDISDASRLDAELARADAKKVDLEKLLGDLVEISRQIRGSKKPVLLDFVVDRKDNPRASFIVSGYELRIGQIITNLIENARSFVPEQNGRIVVRLTRSRLRCIVYVEDNGPGIQAEDIDRIFERFYTDRPEGEDFGQNSGLGLSISRQIAEAHGGTLRAENIAGKDGRISGARFVLSLPAGPHP.

Topologically, residues M1–R29 are cytoplasmic. Residues I30 to Q50 form a helical membrane-spanning segment. Residues F51–R260 are Periplasmic-facing. The helical transmembrane segment at L261 to L281 threads the bilayer. At S282–P577 the chain is on the cytoplasmic side. The HAMP domain maps to S283 to A339. One can recognise a Histidine kinase domain in the interval D347–P575. H350 carries the phosphohistidine modification.

Homodimer.

It is found in the cell inner membrane. The catalysed reaction is ATP + protein L-histidine = ADP + protein N-phospho-L-histidine.. The protein operates within glycan metabolism; exopolysaccharide biosynthesis. In terms of biological role, member of a two-component regulatory system ChvG(ExoS)/ChvI involved in regulating the production of succinoglycan. Activates ChvI by phosphorylation. This Rhizobium meliloti (strain 1021) (Ensifer meliloti) protein is Sensor protein ChvG (chvG).